The chain runs to 379 residues: Heme chaperone HemW (379 aa).

The Radical SAM core domain occupies 1–233; that stretch reads MKSAYIHIPF…MSKMEAHGIH (233 aa). An S-adenosyl-L-methionine-binding site is contributed by Tyr-5. [4Fe-4S] cluster contacts are provided by Cys-11, Cys-15, and Cys-18. Residues Gly-60, 61–62, Glu-94, Gln-121, Arg-133, and Asp-158 contribute to the S-adenosyl-L-methionine site; that span reads GT.

This sequence belongs to the anaerobic coproporphyrinogen-III oxidase family. HemW subfamily. It depends on [4Fe-4S] cluster as a cofactor.

The protein localises to the cytoplasm. Its function is as follows. Probably acts as a heme chaperone, transferring heme to an unknown acceptor. Binds one molecule of heme per monomer, possibly covalently. Binds 1 [4Fe-4S] cluster. The cluster is coordinated with 3 cysteines and an exchangeable S-adenosyl-L-methionine. The protein is Heme chaperone HemW of Bacillus subtilis (strain 168).